We begin with the raw amino-acid sequence, 196 residues long: Imidazole glycerol phosphate synthase subunit HisH (196 aa).

A Glutamine amidotransferase type-1 domain is found at 2–196; it reads NVVIVDTECA…LKRFLELTLC (195 aa). Catalysis depends on Cys-77, which acts as the Nucleophile. Residues His-175 and Glu-177 contribute to the active site.

Heterodimer of HisH and HisF.

The protein resides in the cytoplasm. It carries out the reaction 5-[(5-phospho-1-deoxy-D-ribulos-1-ylimino)methylamino]-1-(5-phospho-beta-D-ribosyl)imidazole-4-carboxamide + L-glutamine = D-erythro-1-(imidazol-4-yl)glycerol 3-phosphate + 5-amino-1-(5-phospho-beta-D-ribosyl)imidazole-4-carboxamide + L-glutamate + H(+). The enzyme catalyses L-glutamine + H2O = L-glutamate + NH4(+). It functions in the pathway amino-acid biosynthesis; L-histidine biosynthesis; L-histidine from 5-phospho-alpha-D-ribose 1-diphosphate: step 5/9. Its function is as follows. IGPS catalyzes the conversion of PRFAR and glutamine to IGP, AICAR and glutamate. The HisH subunit catalyzes the hydrolysis of glutamine to glutamate and ammonia as part of the synthesis of IGP and AICAR. The resulting ammonia molecule is channeled to the active site of HisF. This is Imidazole glycerol phosphate synthase subunit HisH from Idiomarina loihiensis (strain ATCC BAA-735 / DSM 15497 / L2-TR).